A 391-amino-acid chain; its full sequence is Secreted aspartic protease 1 (391 aa).

The signal sequence occupies residues 1-18; it reads MFLKNIFIALAIALLVDA. The propeptide at 19 to 50 is activation peptide; sequence SPAKRSPGFVTLDFDVIKTPVNATGQEGKVKR. N-linked (GlcNAc...) asparagine glycosylation occurs at Asn40. In terms of domain architecture, Peptidase A1 spans 64–377; it reads YAADITIGSN…DLDDDKISLA (314 aa). The active site involves Asp82. Residue 82–84 coordinates pepstatin A; sequence DTG. Cys97 and Cys109 form a disulfide bridge. 135–136 is a pepstatin A binding site; the sequence is GD. 2 residues coordinate Zn(2+): Asp241 and Asp263. Residue Asp267 is part of the active site. Residue 267 to 271 participates in pepstatin A binding; that stretch reads DSGTT. Cys305 and Cys343 are disulfide-bonded.

It belongs to the peptidase A1 family. In terms of assembly, monomer.

The protein localises to the secreted. The enzyme catalyses Preferential cleavage at the carboxyl of hydrophobic amino acids, but fails to cleave 15-Leu-|-Tyr-16, 16-Tyr-|-Leu-17 and 24-Phe-|-Phe-25 of insulin B chain. Activates trypsinogen, and degrades keratin.. With respect to regulation, inhibited by pepstatin A analogs and squash aspartic peptidase inhibitor (SQAPI). Secreted aspartic peptidases (SAPs) are a group of ten acidic hydrolases considered as key virulence factors. These enzymes supply the fungus with nutrient amino acids as well as are able to degrade the selected host's proteins involved in the immune defense. Induces host inflammatory cytokine production in a proteolytic activity-independent way. Plays a role in tissue damage during superficial infection. Moreover, acts toward human hemoglobin though limited proteolysis to generate a variety of antimicrobial hemocidins, enabling to compete with the other microorganisms of the same physiological niche using the microbicidal peptides generated from the host protein. Its function is as follows. Plays a key role in defense against host by cleaving histatin-5 (Hst 5), a peptide from human saliva that carries out fungicidal activity. The cleavage rate decreases in an order of SAP2 &gt; SAP9 &gt; SAP3 &gt; SAP7 &gt; SAP4 &gt; SAP1 &gt; SAP8. The first cleavage occurs between residues 'Lys-17' and 'His-18' of Hst 5, giving DSHAKRHHGYKRKFHEK and HHSHRGY peptides. Further fragmentation by SAP1 results in AKRHHGYKRKFHEK and AKRHHGY products. The chain is Secreted aspartic protease 1 from Candida albicans (strain SC5314 / ATCC MYA-2876) (Yeast).